We begin with the raw amino-acid sequence, 324 residues long: Probable cell division protein WhiA (324 aa).

Residues 276 to 310 (TLKELGEMMQGGKVSKSGINHRLRKIDEFADKLRN) constitute a DNA-binding region (H-T-H motif).

This sequence belongs to the WhiA family.

In terms of biological role, involved in cell division and chromosome segregation. This chain is Probable cell division protein WhiA, found in Shouchella clausii (strain KSM-K16) (Alkalihalobacillus clausii).